The chain runs to 354 residues: MPGNSFGKMFKLTTFGESHGVAIGGVIDGCPAGLEIDTESVQNDLNRRRPGQSAIVTQRKEPDTVEFLSGIFEGKTTGTPIGFIIKNANQKSKDYSHIKDTYRPSHADYTYDEKYGIRDYRGGGRSSARETACRVVAGSIAKQMLKSVSFNAFVSSVGKIELNKDYSELDFSEIEKNPVRCPDPEMAREMEAYIKEIRGDGDTVGGTVQCVIKNVPIGLGEPVFDKLHAELGKAMLSINAVKGFEYGSGFEGTKMRGSEHNDHFNTDGSTQTNLSGGIQGGISNGMDIYFKVAFKPVATLMQKQQTINSKGDEVEMQGKGRHDPCVVPRAVPIVESMAALVLADYYLQNKSSKI.

Residue Arg48 participates in NADP(+) binding. FMN contacts are provided by residues 125-127 (RSS), 239-240 (NA), Gly280, 295-299 (KPVAT), and Arg321.

Belongs to the chorismate synthase family. As to quaternary structure, homotetramer. FMNH2 serves as cofactor.

The enzyme catalyses 5-O-(1-carboxyvinyl)-3-phosphoshikimate = chorismate + phosphate. The protein operates within metabolic intermediate biosynthesis; chorismate biosynthesis; chorismate from D-erythrose 4-phosphate and phosphoenolpyruvate: step 7/7. Its function is as follows. Catalyzes the anti-1,4-elimination of the C-3 phosphate and the C-6 proR hydrogen from 5-enolpyruvylshikimate-3-phosphate (EPSP) to yield chorismate, which is the branch point compound that serves as the starting substrate for the three terminal pathways of aromatic amino acid biosynthesis. This reaction introduces a second double bond into the aromatic ring system. This Christiangramia forsetii (strain DSM 17595 / CGMCC 1.15422 / KT0803) (Gramella forsetii) protein is Chorismate synthase.